A 362-amino-acid chain; its full sequence is Phosphoserine aminotransferase (362 aa).

The L-glutamate site is built by serine 9 and arginine 42. Pyridoxal 5'-phosphate is bound by residues glycine 76–arginine 77, tryptophan 102, threonine 153, aspartate 174, and glutamine 197. Lysine 198 bears the N6-(pyridoxal phosphate)lysine mark. Asparagine 239–threonine 240 contacts pyridoxal 5'-phosphate.

This sequence belongs to the class-V pyridoxal-phosphate-dependent aminotransferase family. SerC subfamily. Homodimer. It depends on pyridoxal 5'-phosphate as a cofactor.

It localises to the cytoplasm. It catalyses the reaction O-phospho-L-serine + 2-oxoglutarate = 3-phosphooxypyruvate + L-glutamate. It carries out the reaction 4-(phosphooxy)-L-threonine + 2-oxoglutarate = (R)-3-hydroxy-2-oxo-4-phosphooxybutanoate + L-glutamate. The protein operates within amino-acid biosynthesis; L-serine biosynthesis; L-serine from 3-phospho-D-glycerate: step 2/3. It functions in the pathway cofactor biosynthesis; pyridoxine 5'-phosphate biosynthesis; pyridoxine 5'-phosphate from D-erythrose 4-phosphate: step 3/5. Catalyzes the reversible conversion of 3-phosphohydroxypyruvate to phosphoserine and of 3-hydroxy-2-oxo-4-phosphonooxybutanoate to phosphohydroxythreonine. The chain is Phosphoserine aminotransferase from Shigella dysenteriae serotype 1 (strain Sd197).